A 737-amino-acid polypeptide reads, in one-letter code: 1,4-alpha-glucan branching enzyme GlgB (737 aa).

Catalysis depends on aspartate 419, which acts as the Nucleophile. Glutamate 472 serves as the catalytic Proton donor.

Belongs to the glycosyl hydrolase 13 family. GlgB subfamily. Monomer.

The catalysed reaction is Transfers a segment of a (1-&gt;4)-alpha-D-glucan chain to a primary hydroxy group in a similar glucan chain.. It participates in glycan biosynthesis; glycogen biosynthesis. In terms of biological role, catalyzes the formation of the alpha-1,6-glucosidic linkages in glycogen by scission of a 1,4-alpha-linked oligosaccharide from growing alpha-1,4-glucan chains and the subsequent attachment of the oligosaccharide to the alpha-1,6 position. This chain is 1,4-alpha-glucan branching enzyme GlgB, found in Cellvibrio japonicus (strain Ueda107) (Pseudomonas fluorescens subsp. cellulosa).